The sequence spans 198 residues: MSNSAVSYKPIVNIENIVATVTLEQSLDLYAMERSIPNIEYDPDQFPGLIFRLEQPKVTALIFKSGKMVVTGAKSTEELIKAVKRIIKTLKKYGIKIVGKPKIQIQNIVASANLHVNVNLDKAAFLLENNMYEPEQFPGLIFRMDDPRVVLLIFSSGKMVITGAKREDEVSKAVKRIFDKLAELDCVKPIEEEEELEL.

A run of 2 repeats spans residues 14-90 (IENI…IKTL) and 105-181 (IQNI…FDKL).

This sequence belongs to the TBP family.

Functionally, general factor that plays a role in the activation of archaeal genes transcribed by RNA polymerase. Binds specifically to the TATA box promoter element which lies close to the position of transcription initiation. The protein is TATA-box-binding protein (tbp) of Saccharolobus solfataricus (strain ATCC 35092 / DSM 1617 / JCM 11322 / P2) (Sulfolobus solfataricus).